A 491-amino-acid chain; its full sequence is Lysine--tRNA ligase (491 aa).

Residues Glu-400 and Glu-407 each contribute to the Mg(2+) site.

The protein belongs to the class-II aminoacyl-tRNA synthetase family. In terms of assembly, homodimer. The cofactor is Mg(2+).

The protein resides in the cytoplasm. The catalysed reaction is tRNA(Lys) + L-lysine + ATP = L-lysyl-tRNA(Lys) + AMP + diphosphate. The chain is Lysine--tRNA ligase from Mesomycoplasma hyopneumoniae (strain 7448) (Mycoplasma hyopneumoniae).